Here is a 487-residue protein sequence, read N- to C-terminus: Probable UDP-N-acetylglucosamine pyrophosphorylase (487 aa).

A Substrate binding motif is present at residues 105–108 (LAGG). Residues 105-108 (LAGG), lysine 119, glutamine 198, and glycine 225 each bind UTP. Residue asparagine 226 coordinates substrate. Aspartate 256 lines the UTP pocket. Residues 307–308 (EY) carry the Substrate binding motif. Lysine 382 provides a ligand contact to UTP. Position 412 (lysine 412) interacts with substrate.

The protein belongs to the UDPGP type 1 family.

The protein resides in the cytoplasm. The enzyme catalyses N-acetyl-alpha-D-glucosamine 1-phosphate + UTP + H(+) = UDP-N-acetyl-alpha-D-glucosamine + diphosphate. Its pathway is nucleotide-sugar biosynthesis; UDP-N-acetyl-alpha-D-glucosamine biosynthesis; UDP-N-acetyl-alpha-D-glucosamine from N-acetyl-alpha-D-glucosamine 1-phosphate: step 1/1. The protein is Probable UDP-N-acetylglucosamine pyrophosphorylase (uap1) of Dictyostelium discoideum (Social amoeba).